The following is a 378-amino-acid chain: UDP-4-amino-4-deoxy-L-arabinose--oxoglutarate aminotransferase (378 aa).

Lys182 is modified (N6-(pyridoxal phosphate)lysine).

Belongs to the DegT/DnrJ/EryC1 family. ArnB subfamily. As to quaternary structure, homodimer. It depends on pyridoxal 5'-phosphate as a cofactor.

The catalysed reaction is UDP-4-amino-4-deoxy-beta-L-arabinose + 2-oxoglutarate = UDP-beta-L-threo-pentopyranos-4-ulose + L-glutamate. Its pathway is nucleotide-sugar biosynthesis; UDP-4-deoxy-4-formamido-beta-L-arabinose biosynthesis; UDP-4-deoxy-4-formamido-beta-L-arabinose from UDP-alpha-D-glucuronate: step 2/3. It participates in bacterial outer membrane biogenesis; lipopolysaccharide biosynthesis. Functionally, catalyzes the conversion of UDP-4-keto-arabinose (UDP-Ara4O) to UDP-4-amino-4-deoxy-L-arabinose (UDP-L-Ara4N). The modified arabinose is attached to lipid A and is required for resistance to polymyxin and cationic antimicrobial peptides. In Aeromonas salmonicida (strain A449), this protein is UDP-4-amino-4-deoxy-L-arabinose--oxoglutarate aminotransferase.